We begin with the raw amino-acid sequence, 73 residues long: Serine rich endogenous peptide 1 (73 aa).

The signal sequence occupies residues 1–28 (MGMSGSSGLVHVLMLLLLLSILFHHTES). The interval 48 to 73 (YKPNTAVETPPSRSRRGGGGQNTGAD) is disordered. Positions 53-67 (AVETPPSRSRRGGGG) match the SCOOP motif motif. Residues 59-61 (SRS) carry the SxS motif essential for MIK2 binding motif. Over residues 64 to 73 (GGGGQNTGAD) the composition is skewed to gly residues.

The protein belongs to the serine rich endogenous peptide (SCOOP) phytocytokine family. Interacts with MIK2 (via extracellular leucine-rich repeat domain); this interaction triggers the formation of complex between MIK2 and the BAK1/SERK3 and SERK4 coreceptors, and subsequent BAK1 activation by phosphorylation. In terms of tissue distribution, mostly expressed in leaves and flowers, and, to a lower extent, in seedlings shoots.

It localises to the cell membrane. It is found in the secreted. The protein resides in the extracellular space. Its subcellular location is the apoplast. Its function is as follows. Brassicaceae-specific phytocytokine (plant endogenous peptide released into the apoplast) perceived by MIK2 in a BAK1/SERK3 and SERK4 coreceptors-dependent manner, that modulates various physiological and antimicrobial processes including growth prevention and reactive oxygen species (ROS) response regulation. This chain is Serine rich endogenous peptide 1, found in Arabidopsis thaliana (Mouse-ear cress).